A 181-amino-acid chain; its full sequence is Avenin-like a6 (181 aa).

An N-terminal signal peptide occupies residues M1–A19.

Belongs to the prolamin family. Contains 7 disulfide bonds.

Seed storage protein. Not integrated in the gluten polymer through disulfide bonds, unless incorporated by reduction and reoxidation during dough making. Increases dough strength and bread volume, but decreases dough stability when added into a base wheat flour. The chain is Avenin-like a6 from Triticum aestivum (Wheat).